Here is a 301-residue protein sequence, read N- to C-terminus: Acetylglutamate kinase (301 aa).

Substrate-binding positions include Gly-68–Gly-69, Arg-90, and Asn-195.

Belongs to the acetylglutamate kinase family. ArgB subfamily.

The protein resides in the cytoplasm. The enzyme catalyses N-acetyl-L-glutamate + ATP = N-acetyl-L-glutamyl 5-phosphate + ADP. Its pathway is amino-acid biosynthesis; L-arginine biosynthesis; N(2)-acetyl-L-ornithine from L-glutamate: step 2/4. Catalyzes the ATP-dependent phosphorylation of N-acetyl-L-glutamate. This Pseudomonas entomophila (strain L48) protein is Acetylglutamate kinase.